Consider the following 222-residue polypeptide: 3-demethoxyubiquinol 3-hydroxylase (222 aa).

Fe cation-binding residues include glutamate 71, glutamate 101, histidine 104, glutamate 153, glutamate 185, and histidine 188.

The protein belongs to the COQ7 family. Requires Fe cation as cofactor.

It localises to the cell membrane. The catalysed reaction is a 5-methoxy-2-methyl-3-(all-trans-polyprenyl)benzene-1,4-diol + AH2 + O2 = a 3-demethylubiquinol + A + H2O. Its pathway is cofactor biosynthesis; ubiquinone biosynthesis. Catalyzes the hydroxylation of 2-nonaprenyl-3-methyl-6-methoxy-1,4-benzoquinol during ubiquinone biosynthesis. The polypeptide is 3-demethoxyubiquinol 3-hydroxylase (Bordetella pertussis (strain Tohama I / ATCC BAA-589 / NCTC 13251)).